The following is a 743-amino-acid chain: Keratin, type I cytoskeletal 9 (743 aa).

A compositionally biased stretch (low complexity) spans 1-16 (MSCRQSSSSFWSSSSS). Positions 1–46 (MSCRQSSSSFWSSSSSCGGGGGRGGSGGSMRSSFSRSSRAGGGGGG) are disordered. Residues 1-130 (MSCRQSSSSF…GGEGGILNTN (130 aa)) are head. 2 positions are modified to phosphoserine: serine 14 and serine 16. Gly residues predominate over residues 17–28 (CGGGGGRGGSGG). Residues 29–39 (SMRSSFSRSSR) show a composition bias toward low complexity. Phosphoserine occurs at positions 55 and 155. The segment at 131–166 (EKIVMQNLNSRLASYMEKVLELEESNTAMEKQIQDW) is coil 1A. The region spanning 131–443 (EKIVMQNLNS…ELLEGGQQDF (313 aa)) is the IF rod domain. Positions 167-185 (YSKRGPKVFQKDNTHYYDT) are linker 1. Residues 186-277 (IEDLKDRIVD…KNHKEEMSQL (92 aa)) form a coil 1B region. Positions 278 to 300 (TGQNDGDVNVEINVAPSTDLTRV) are linker 12. The segment at 301 to 439 (LNDMREEYEQ…ETYRELLEGG (139 aa)) is coil 2. Disordered regions lie at residues 440–468 (QQDF…GSYG) and 501–743 (GGSG…KMRY). Residues 440–709 (QQDFESSGAG…GGGSGSGGGS (270 aa)) form a tail region. Gly residues-rich tracts occupy residues 449 to 468 (GQIG…GSYG) and 501 to 717 (GGSG…GGGN).

It belongs to the intermediate filament family. Heterotetramer of two type I and two type II keratins. As to expression, expressed in footpad epidermis and testis (at protein level).

Functionally, may serve an important special function either in the mature palmar and plantar skin tissue or in the morphogenetic program of the formation of these tissues. Plays a role in keratin filament assembly. Plays an essential role in the correct development of sperm. The chain is Keratin, type I cytoskeletal 9 from Mus musculus (Mouse).